The chain runs to 198 residues: Glycerol-3-phosphate acyltransferase (198 aa).

5 helical membrane-spanning segments follow: residues 5 to 25 (LILL…LWIG), 56 to 76 (SIVT…PFFF), 84 to 104 (FWLL…FAGF), 114 to 134 (AGVI…VFLV), and 158 to 178 (LFMG…FVIW).

It belongs to the PlsY family. Probably interacts with PlsX.

It is found in the cell membrane. The catalysed reaction is an acyl phosphate + sn-glycerol 3-phosphate = a 1-acyl-sn-glycero-3-phosphate + phosphate. Its pathway is lipid metabolism; phospholipid metabolism. Catalyzes the transfer of an acyl group from acyl-phosphate (acyl-PO(4)) to glycerol-3-phosphate (G3P) to form lysophosphatidic acid (LPA). This enzyme utilizes acyl-phosphate as fatty acyl donor, but not acyl-CoA or acyl-ACP. This is Glycerol-3-phosphate acyltransferase from Listeria monocytogenes serovar 1/2a (strain ATCC BAA-679 / EGD-e).